A 453-amino-acid chain; its full sequence is Midnolin-A (453 aa).

In terms of domain architecture, Ubiquitin-like spans Met20 to Gly94. Disordered regions lie at residues Ser184–Val219, Cys232–Lys256, Arg333–Ala376, and Gln390–Leu429. Residues His206–Val219 are compositionally biased toward polar residues. Composition is skewed to low complexity over residues Ser239–Ser252 and Thr338–Pro351. A compositionally biased stretch (basic and acidic residues) spans Ser365–Ala376. Residues Gln390–Arg399 are compositionally biased toward basic residues. A compositionally biased stretch (low complexity) spans Arg415–Ser428.

It is found in the nucleus. Its subcellular location is the cytoplasm. The protein localises to the cytosol. The protein resides in the nucleolus. Its function is as follows. Facilitates ubiquitin-independent proteasomal degradation of polycomb protein CBX4. Plays a role in inhibiting the activity of glucokinase GCK and both glucose-induced and basal insulin secretion. The polypeptide is Midnolin-A (midn-a) (Xenopus laevis (African clawed frog)).